A 98-amino-acid polypeptide reads, in one-letter code: Integration host factor subunit alpha (98 aa).

Positions 49 to 71 (FGNFDLRDKNQRPGRNPKTGEDI) are disordered.

It belongs to the bacterial histone-like protein family. Heterodimer of an alpha and a beta chain.

Its function is as follows. This protein is one of the two subunits of integration host factor, a specific DNA-binding protein that functions in genetic recombination as well as in transcriptional and translational control. The polypeptide is Integration host factor subunit alpha (Shewanella sp. (strain MR-4)).